A 144-amino-acid chain; its full sequence is Putative pre-16S rRNA nuclease (144 aa).

The protein belongs to the YqgF nuclease family.

It localises to the cytoplasm. Its function is as follows. Could be a nuclease involved in processing of the 5'-end of pre-16S rRNA. The polypeptide is Putative pre-16S rRNA nuclease (Symbiobacterium thermophilum (strain DSM 24528 / JCM 14929 / IAM 14863 / T)).